The sequence spans 367 residues: Uroporphyrinogen decarboxylase (367 aa).

Residues 27-31, D77, Y157, T212, and H333 contribute to the substrate site; that span reads RQAGR.

This sequence belongs to the uroporphyrinogen decarboxylase family. Homodimer.

The protein localises to the cytoplasm. The enzyme catalyses uroporphyrinogen III + 4 H(+) = coproporphyrinogen III + 4 CO2. Its pathway is porphyrin-containing compound metabolism; protoporphyrin-IX biosynthesis; coproporphyrinogen-III from 5-aminolevulinate: step 4/4. Its function is as follows. Catalyzes the decarboxylation of four acetate groups of uroporphyrinogen-III to yield coproporphyrinogen-III. The sequence is that of Uroporphyrinogen decarboxylase from Cupriavidus metallidurans (strain ATCC 43123 / DSM 2839 / NBRC 102507 / CH34) (Ralstonia metallidurans).